Consider the following 595-residue polypeptide: Beta-(1--&gt;2)glucan export ATP-binding/permease protein NdvA (595 aa).

Positions 21–301 (SLLICAANVM…MSNFINLTVS (281 aa)) constitute an ABC transmembrane type-1 domain. 5 helical membrane passes run 22 to 42 (LLICAANVMLAIITIAEPILF), 55 to 75 (IILTLTIWVCFGISHIIAYVL), 128 to 148 (AIWLDFMRQHLSTLVALFILI), 152 to 172 (FNMNWRLSIVLVVLAIIYVLI), and 248 to 268 (TASTISIVCVLLLGAFFVAKG). Residues 335–569 (VQFHHVTYKF…GGRFYKLLKA (235 aa)) enclose the ABC transporter domain. 368–375 (GPTGAGKT) provides a ligand contact to ATP.

This sequence belongs to the ABC transporter superfamily. Beta-(1--&gt;2)glucan exporter (TC 3.A.1.108.1) family. Homodimer.

It localises to the cell inner membrane. The enzyme catalyses [(1-&gt;2)-beta-D-glucosyl](n)(in) + ATP + H2O = [(1-&gt;2)-beta-D-glucosyl](n)(out) + ADP + phosphate + H(+). Its function is as follows. Involved in beta-(1--&gt;2)glucan export. Transmembrane domains (TMD) form a pore in the inner membrane and the ATP-binding domain (NBD) is responsible for energy generation. The sequence is that of Beta-(1--&gt;2)glucan export ATP-binding/permease protein NdvA from Bartonella quintana (strain Toulouse) (Rochalimaea quintana).